A 138-amino-acid polypeptide reads, in one-letter code: Phosphoribosyl-AMP cyclohydrolase (138 aa).

D84 provides a ligand contact to Mg(2+). C85 contributes to the Zn(2+) binding site. 2 residues coordinate Mg(2+): D86 and D88. Residues C102 and C109 each coordinate Zn(2+).

The protein belongs to the PRA-CH family. Homodimer. Mg(2+) is required as a cofactor. The cofactor is Zn(2+).

It localises to the cytoplasm. The enzyme catalyses 1-(5-phospho-beta-D-ribosyl)-5'-AMP + H2O = 1-(5-phospho-beta-D-ribosyl)-5-[(5-phospho-beta-D-ribosylamino)methylideneamino]imidazole-4-carboxamide. The protein operates within amino-acid biosynthesis; L-histidine biosynthesis; L-histidine from 5-phospho-alpha-D-ribose 1-diphosphate: step 3/9. Functionally, catalyzes the hydrolysis of the adenine ring of phosphoribosyl-AMP. In Burkholderia orbicola (strain MC0-3), this protein is Phosphoribosyl-AMP cyclohydrolase.